Here is a 401-residue protein sequence, read N- to C-terminus: Zinc finger CCHC domain-containing protein 12 (401 aa).

2 disordered regions span residues 1–20 (MASI…PLPP) and 270–292 (DSDE…SAGP). Acidic residues predominate over residues 270–282 (DSDEDVILVEPDD). A CCHC-type zinc finger spans residues 345–362 (VHCSHCGEEGHSKETCDN).

The protein belongs to the ZCCHC12 family. In terms of assembly, interacts with SMAD1 and CREB-binding protein (CBP). Forms a protein-DNA complex through its association with SMAD1.

Transcriptional coactivator in the bone morphogenetic protein (BMP)-signaling pathway. It positively modulates BMP signaling by interacting with SMAD1 and associating with CBP in the transcription complex. It contributes to the BMP-induced enhancement of cholinergic-neuron-specific gene expression. The polypeptide is Zinc finger CCHC domain-containing protein 12 (Zcchc12) (Rattus norvegicus (Rat)).